The sequence spans 53 residues: Large ribosomal subunit protein bL33 (53 aa).

This sequence belongs to the bacterial ribosomal protein bL33 family.

The chain is Large ribosomal subunit protein bL33 from Malacoplasma penetrans (strain HF-2) (Mycoplasma penetrans).